Consider the following 382-residue polypeptide: Mannitol-1-phosphate 5-dehydrogenase (382 aa).

3–14 (ALHFGAGNIGRG) is an NAD(+) binding site.

It belongs to the mannitol dehydrogenase family.

The enzyme catalyses D-mannitol 1-phosphate + NAD(+) = beta-D-fructose 6-phosphate + NADH + H(+). The polypeptide is Mannitol-1-phosphate 5-dehydrogenase (Tolumonas auensis (strain DSM 9187 / NBRC 110442 / TA 4)).